Reading from the N-terminus, the 232-residue chain is Zinc-finger homeodomain protein 5 (232 aa).

The segment covering 1 to 11 (MELSEHEEDAG) has biased composition (acidic residues). The disordered stretch occupies residues 1–25 (MELSEHEEDAGDVGGGCSSPPTPPH). The ZF-HD dimerization-type; degenerate zinc finger occupies 40 to 86 (YHECLRNHAAASGGHVVDGCGEFMPASTEEPLACAACGCHRSFHRRD). Residues 126–170 (GLPFPGYGTPSGGTGTTTASSSDERLRPSPVQPRRRSRTTFTREQ) are disordered. A DNA-binding region (homeobox) is located at residues 159-222 (RRRSRTTFTR…NNKHSFKQKQ (64 aa)).

In terms of assembly, homo- and heterodimer with other ZFHD proteins.

It is found in the nucleus. Its function is as follows. Putative transcription factor. In Oryza sativa subsp. japonica (Rice), this protein is Zinc-finger homeodomain protein 5 (ZHD5).